Here is a 162-residue protein sequence, read N- to C-terminus: Phospholipase A and acyltransferase 2 (162 aa).

The Cytoplasmic portion of the chain corresponds to 1–133 (MALARPRPRL…VSRSDQVTGA (133 aa)). The 117-residue stretch at 13 to 129 (LIEISRFGYA…LRYGVSRSDQ (117 aa)) folds into the LRAT domain. Catalysis depends on residues histidine 23 and histidine 35. Cysteine 113 functions as the Acyl-thioester intermediate in the catalytic mechanism. A helical membrane pass occupies residues 134-154 (VTTVGVAAGLLAAASLVGILL). Over 155–162 (ARSKRERQ) the chain is Lumenal.

This sequence belongs to the H-rev107 family. Expressed in liver, kidney, small intestine testis and colon. Undetectable in testis, placenta, salivary gland and fetal brain.

Its subcellular location is the cytoplasm. It is found in the membrane. The catalysed reaction is a 1,2-diacyl-sn-glycero-3-phosphocholine + H2O = a 1-acyl-sn-glycero-3-phosphocholine + a fatty acid + H(+). It carries out the reaction a 1,2-diacyl-sn-glycero-3-phosphocholine + H2O = a 2-acyl-sn-glycero-3-phosphocholine + a fatty acid + H(+). The enzyme catalyses a 1,2-diacyl-sn-glycero-3-phosphoethanolamine + a 1,2-diacyl-sn-glycero-3-phosphocholine = an N-acyl-1,2-diacyl-sn-glycero-3-phosphoethanolamine + a 1-acyl-sn-glycero-3-phosphocholine + H(+). It catalyses the reaction a 1,2-diacyl-sn-glycero-3-phosphoethanolamine + a 1,2-diacyl-sn-glycero-3-phosphocholine = an N-acyl-1,2-diacyl-sn-glycero-3-phosphoethanolamine + a 2-acyl-sn-glycero-3-phosphocholine + H(+). The catalysed reaction is 1,2-dihexadecanoyl-sn-glycero-3-phosphocholine + H2O = 1-hexadecanoyl-sn-glycero-3-phosphocholine + hexadecanoate + H(+). It carries out the reaction 1,2-dihexadecanoyl-sn-glycero-3-phosphocholine + H2O = 2-hexadecanoyl-sn-glycero-3-phosphocholine + hexadecanoate + H(+). The enzyme catalyses 1-hexadecanoyl-2-(9Z-octadecenoyl)-sn-glycero-3-phosphocholine + H2O = 2-(9Z-octadecenoyl)-sn-glycero-3-phosphocholine + hexadecanoate + H(+). It catalyses the reaction 1-hexadecanoyl-2-(9Z-octadecenoyl)-sn-glycero-3-phosphocholine + H2O = 1-hexadecanoyl-sn-glycero-3-phosphocholine + (9Z)-octadecenoate + H(+). The catalysed reaction is 1-hexadecanoyl-2-(5Z,8Z,11Z,14Z-eicosatetraenoyl)-sn-glycero-3-phosphocholine + H2O = 2-(5Z,8Z,11Z,14Z)-eicosatetraenoyl-sn-glycero-3-phosphocholine + hexadecanoate + H(+). It carries out the reaction 1-hexadecanoyl-2-(9Z,12Z-octadecadienoyl)-sn-glycero-3-phosphoethanolamine + H2O = 1-hexadecanoyl-sn-glycero-3-phosphoethanolamine + (9Z,12Z)-octadecadienoate + H(+). The enzyme catalyses 1-hexadecanoyl-2-(9Z,12Z-octadecadienoyl)-sn-glycero-3-phosphoethanolamine + H2O = 2-(9Z,12Z)-octadecadienoyl-sn-glycero-3-phosphoethanolamine + hexadecanoate + H(+). It catalyses the reaction 1-hexadecanoyl-2-(5Z,8Z,11Z,14Z-eicosatetraenoyl)-sn-glycero-3-phosphoethanolamine + H2O = 1-hexadecanoyl-sn-glycero-3-phosphoethanolamine + (5Z,8Z,11Z,14Z)-eicosatetraenoate + H(+). The catalysed reaction is 1-hexadecanoyl-2-(5Z,8Z,11Z,14Z-eicosatetraenoyl)-sn-glycero-3-phosphoethanolamine + H2O = 2-(5Z,8Z,11Z,14Z)-eicosatetraenoyl-sn-glycero-3-phosphoethanolamine + hexadecanoate + H(+). It carries out the reaction 1,2-di-(9Z-octadecenoyl)-sn-glycero-3-phosphoethanolamine + 1,2-dihexadecanoyl-sn-glycero-3-phosphocholine = N-hexadecanoyl-1,2-di-(9Z-octadecenoyl)-sn-glycero-3-phosphoethanolamine + 2-hexadecanoyl-sn-glycero-3-phosphocholine + H(+). The enzyme catalyses 1,2-di-(9Z-octadecenoyl)-sn-glycero-3-phosphoethanolamine + 1,2-dihexadecanoyl-sn-glycero-3-phosphocholine = N-hexadecanoyl-1,2-di-(9Z-octadecenoyl)-sn-glycero-3-phosphoethanolamine + 1-hexadecanoyl-sn-glycero-3-phosphocholine + H(+). It catalyses the reaction 1-hexanoyl-2-acyl-sn-glycero-3-phosphocholine + H2O = 1-hexanoyl-sn-glycero-3-phosphocholine + a fatty acid + H(+). The catalysed reaction is 1,2-diheptadecanoyl-sn-glycero-3-phosphoethanolamine + 1-(9Z-octadecenoyl)-2-hexadecanoyl-sn-glycero-3-phosphocholine = 1,2-diheptadecanoyl-sn-glycero-3-phospho-N-hexadecanoyl-ethanolamine + 1-(9Z-octadecenoyl)-sn-glycero-3-phosphocholine + H(+). It carries out the reaction 1,2-diheptadecanoyl-sn-glycero-3-phosphoethanolamine + 1-(9Z-octadecenoyl)-2-hexadecanoyl-sn-glycero-3-phosphocholine = 1,2-diheptadecanoyl-sn-glycero-3-phospho-N-(9Z-octadecenoyl)-ethanolamine + 2-hexadecanoyl-sn-glycero-3-phosphocholine + H(+). The enzyme catalyses 1,2-dihexanoyl-sn-glycero-3-phosphocholine + 1,2-diheptanoyl-sn-glycero-3-phosphocholine = 1-heptanoyl-2-hexanoyl-sn-glycero-3-phosphocholine + 1-hexanoyl-2-heptanoyl-sn-glycero-3-phosphocholine. It catalyses the reaction 1,2-diheptanoyl-sn-glycero-3-phosphocholine + 1,2-dihexadecanoyl-sn-glycero-3-phosphocholine = 1-hexadecanoyl-2-heptanoyl-sn-glycero-3-phosphocholine + 1-heptanoyl-2-hexadecanoyl-sn-glycero-3-phosphocholine. The catalysed reaction is 1,2-dihexanoyl-sn-glycero-3-phosphoethanolamine + 1,2-diheptanoyl-sn-glycero-3-phosphocholine = 1-heptanoyl-2-hexanoyl-sn-glycero-3-phosphoethanolamine + 1-hexanoyl-2-heptanoyl-sn-glycero-3-phosphocholine. It carries out the reaction 1-hexanoyl-2-acyl-sn-glycero-3-phosphocholine + H2O = hexanoate + a 2-acyl-sn-glycero-3-phosphocholine + H(+). The enzyme catalyses 1,2-dihexanoyl-sn-glycero-3-phosphoethanolamine + 2-heptanoyl-sn-glycero-3-phosphocholine = hexanoyl-sn-glycero-3-phosphoethanolamine + 1-hexanoyl-2-heptanoyl-sn-glycero-3-phosphocholine. In terms of biological role, exhibits both phospholipase A1/2 and acyltransferase activities. Shows phospholipase A1 (PLA1) and A2 (PLA2) activity, catalyzing the calcium-independent release of fatty acids from the sn-1 or sn-2 position of glycerophospholipids. For most substrates, PLA1 activity is much higher than PLA2 activity. Shows O-acyltransferase activity, catalyzing the transfer of a fatty acyl group from glycerophospholipid to the hydroxyl group of lysophospholipid. Shows N-acyltransferase activity, catalyzing the calcium-independent transfer of a fatty acyl group at the sn-1 position of phosphatidylcholine (PC) and other glycerophospholipids to the primary amine of phosphatidylethanolamine (PE), forming N-acylphosphatidylethanolamine (NAPE), which serves as precursor for N-acylethanolamines (NAEs). Catalyzes N-acylation of PE using both sn-1 and sn-2 palmitoyl groups of PC as acyl donor. Exhibits high phospholipase A1/2 activity and low N-acyltransferase activity. The sequence is that of Phospholipase A and acyltransferase 2 from Homo sapiens (Human).